The following is a 185-amino-acid chain: Protein GrpE (185 aa).

Over residues 1 to 12 the composition is skewed to basic and acidic residues; that stretch reads MADEQLNEKDLN. The segment at 1-22 is disordered; the sequence is MADEQLNEKDLNVEETGAGNAA.

The protein belongs to the GrpE family. Homodimer.

The protein localises to the cytoplasm. Its function is as follows. Participates actively in the response to hyperosmotic and heat shock by preventing the aggregation of stress-denatured proteins, in association with DnaK and GrpE. It is the nucleotide exchange factor for DnaK and may function as a thermosensor. Unfolded proteins bind initially to DnaJ; upon interaction with the DnaJ-bound protein, DnaK hydrolyzes its bound ATP, resulting in the formation of a stable complex. GrpE releases ADP from DnaK; ATP binding to DnaK triggers the release of the substrate protein, thus completing the reaction cycle. Several rounds of ATP-dependent interactions between DnaJ, DnaK and GrpE are required for fully efficient folding. The protein is Protein GrpE of Pseudomonas putida (strain ATCC 700007 / DSM 6899 / JCM 31910 / BCRC 17059 / LMG 24140 / F1).